A 416-amino-acid polypeptide reads, in one-letter code: MPRQLSAAAALFASLAVILHDGSQMRAKAFPETRDYSQPTAAATVQDIKKPVQQPAKQAPHQTLAARFMDGHITFQTAATVKIPTTTPATTKNTATTSPITYTLVTTQATPNNSHTAPPVTEVTVGPSLAPYSLPPTITPPAHTTGTSSSTVSHTTGNTTQPSNQTTLPATLSIALHKSTTGQKPVQPTHAPGTTAAAHNTTRTAAPASTVPGPTLAPQPSSVKTGIYQVLNGSRLCIKAEMGIQLIVQDKESVFSPRRYFNIDPNATQASGNCGTRKSNLLLNFQGGFVNLTFTKDEESYYISEVGAYLTVSDPETIYQGIKHAVVMFQTAVGHSFKCVSEQSLQLSAHLQVKTTDVQLQAFDFEDDHFGNVDECSSDYTIVLPVIGAIVVGLCLMGMGVYKIRLRCQSSGYQRI.

A signal peptide spans 1–27; it reads MPRQLSAAAALFASLAVILHDGSQMRA. Over 28 to 381 the chain is Lumenal; it reads KAFPETRDYS…NVDECSSDYT (354 aa). 7 N-linked (GlcNAc...) asparagine glycosylation sites follow: Asn-112, Asn-158, Asn-164, Asn-200, Asn-232, Asn-266, and Asn-291. 2 disordered regions span residues 136 to 167 and 179 to 219; these read PTITPPAHTTGTSSSTVSHTTGNTTQPSNQTT and STTG…LAPQ. Low complexity predominate over residues 143–160; sequence HTTGTSSSTVSHTTGNTT. Residues 188 to 208 show a composition bias toward low complexity; that stretch reads PTHAPGTTAAAHNTTRTAAPA. Cys-237 and Cys-274 are joined by a disulfide. Cysteines 339 and 376 form a disulfide. Residues 382–402 traverse the membrane as a helical segment; the sequence is IVLPVIGAIVVGLCLMGMGVY. Topologically, residues 403–416 are cytoplasmic; sequence KIRLRCQSSGYQRI.

The protein belongs to the LAMP family. As to quaternary structure, monomer. Interacts with FURIN. In terms of assembly, (Microbial infection) Interacts with mumps virus protein F; this interaction promotes protein F cleavage by FURIN. In terms of tissue distribution, detected in tonsil interdigitating dendritic cells, in spleen, lymph node, Peyer's patches in the small instestine, in thymus medulla and in B-cells (at protein level). Expressed in lymphoid organs and dendritic cells. Expressed in lung. Up-regulated in carcinomas of the esophagus, colon, rectum, ureter, stomach, breast, fallopian tube, thyroid and parotid tissues.

The protein resides in the cell surface. Its subcellular location is the lysosome membrane. The protein localises to the cytoplasmic vesicle membrane. It localises to the early endosome membrane. Functionally, lysosomal membrane glycoprotein which plays a role in the unfolded protein response (UPR) that contributes to protein degradation and cell survival during proteasomal dysfunction. Plays a role in the process of fusion of the lysosome with the autophagosome, thereby modulating the autophagic process. Promotes hepatocellular lipogenesis through activation of the PI3K/Akt pathway. May also play a role in dendritic cell function and in adaptive immunity. Its function is as follows. (Microbial infection) Plays a positive role in post-entry steps of influenza A virus replication, either virus uncoating, cytosolic transport, or nuclear import of viral components, and promotes nuclear accumulation of influenza nucleoprotein/NP at early stages of viral infection. In terms of biological role, (Microbial infection) Supports the FURIN-mediated cleavage of mumps virus fusion protein F by interacting with both FURIN and the unprocessed form but not the processed form of the viral protein F. (Microbial infection) Promotes the intracellular proliferation of Salmonella typhimuium. The sequence is that of Lysosome-associated membrane glycoprotein 3 (LAMP3) from Homo sapiens (Human).